We begin with the raw amino-acid sequence, 184 residues long: Lipid A acyltransferase PagP (184 aa).

The N-terminal stretch at 1–22 (MNIRHGIIAMSSTMLVPLAAEA) is a signal peptide. Catalysis depends on residues His-57, Asp-100, and Ser-101.

It belongs to the lipid A palmitoyltransferase family. As to quaternary structure, homodimer.

The protein resides in the cell outer membrane. It carries out the reaction a lipid A + a 1,2-diacyl-sn-glycero-3-phosphocholine = a hepta-acyl lipid A + a 2-acyl-sn-glycero-3-phosphocholine. The enzyme catalyses a lipid IVA + a 1,2-diacyl-sn-glycero-3-phosphocholine = a lipid IVB + a 2-acyl-sn-glycero-3-phosphocholine. The catalysed reaction is a lipid IIA + a 1,2-diacyl-sn-glycero-3-phosphocholine = a lipid IIB + a 2-acyl-sn-glycero-3-phosphocholine. In terms of biological role, transfers a fatty acid residue from the sn-1 position of a phospholipid to the N-linked hydroxyfatty acid chain on the proximal unit of lipid A or its precursors. In Methylobacillus flagellatus (strain ATCC 51484 / DSM 6875 / VKM B-1610 / KT), this protein is Lipid A acyltransferase PagP.